Consider the following 575-residue polypeptide: Septation ring formation regulator EzrA (575 aa).

Residues 1–8 are Extracellular-facing; it reads MSNGQLIY. A helical transmembrane segment spans residues 9 to 27; sequence LMVAIAVILVLAYVVAIFL. Residues 28–575 lie on the Cytoplasmic side of the membrane; that stretch reads RKRNEGRLEA…YEKTRETIRF (548 aa). Coiled coils occupy residues 105–191, 265–301, 354–416, and 456–526; these read LKAS…FVTL, LYEA…LYDI, VRRI…IEKD, and TASN…IQEA.

It belongs to the EzrA family.

Its subcellular location is the cell membrane. Negative regulator of FtsZ ring formation; modulates the frequency and position of FtsZ ring formation. Inhibits FtsZ ring formation at polar sites. Interacts either with FtsZ or with one of its binding partners to promote depolymerization. The sequence is that of Septation ring formation regulator EzrA from Streptococcus pneumoniae serotype 4 (strain ATCC BAA-334 / TIGR4).